Reading from the N-terminus, the 301-residue chain is Nucleotide-binding protein Helmi_06460 (301 aa).

17–24 provides a ligand contact to ATP; the sequence is GLSGAGKS. GTP is bound at residue 68 to 71; it reads DIRG.

Belongs to the RapZ-like family.

Displays ATPase and GTPase activities. The sequence is that of Nucleotide-binding protein Helmi_06460 from Heliobacterium modesticaldum (strain ATCC 51547 / Ice1).